Reading from the N-terminus, the 349-residue chain is Fructose-1,6-bisphosphatase class 1 (349 aa).

Glu-92, Asp-113, Leu-115, and Asp-116 together coordinate Mg(2+). Residues 116-119 (DGSS), Asn-209, Tyr-242, and Lys-272 contribute to the substrate site. Residue Glu-278 participates in Mg(2+) binding.

The protein belongs to the FBPase class 1 family. Homotetramer. Mg(2+) serves as cofactor.

Its subcellular location is the cytoplasm. The enzyme catalyses beta-D-fructose 1,6-bisphosphate + H2O = beta-D-fructose 6-phosphate + phosphate. Its pathway is carbohydrate biosynthesis; Calvin cycle. The sequence is that of Fructose-1,6-bisphosphatase class 1 from Chloroherpeton thalassium (strain ATCC 35110 / GB-78).